Here is a 790-residue protein sequence, read N- to C-terminus: Endonuclease MutS2 (790 aa).

334-341 (GPNTGGKT) lines the ATP pocket. A Smr domain is found at 715-790 (IDVRGQNLEE…GMGVTIVHLK (76 aa)).

This sequence belongs to the DNA mismatch repair MutS family. MutS2 subfamily. In terms of assembly, homodimer. Binds to stalled ribosomes, contacting rRNA.

Endonuclease that is involved in the suppression of homologous recombination and thus may have a key role in the control of bacterial genetic diversity. Its function is as follows. Acts as a ribosome collision sensor, splitting the ribosome into its 2 subunits. Detects stalled/collided 70S ribosomes which it binds and splits by an ATP-hydrolysis driven conformational change. Acts upstream of the ribosome quality control system (RQC), a ribosome-associated complex that mediates the extraction of incompletely synthesized nascent chains from stalled ribosomes and their subsequent degradation. Probably generates substrates for RQC. The polypeptide is Endonuclease MutS2 (Alkaliphilus oremlandii (strain OhILAs) (Clostridium oremlandii (strain OhILAs))).